The following is a 332-amino-acid chain: D-2-hydroxyacid dehydrogenase (NAD(+)) (332 aa).

Active-site residues include R237 and E266. Catalysis depends on H298, which acts as the Proton donor.

This sequence belongs to the D-isomer specific 2-hydroxyacid dehydrogenase family. Monomer.

The enzyme catalyses a (2R)-2-hydroxycarboxylate + NAD(+) = a 2-oxocarboxylate + NADH + H(+). It carries out the reaction (2R)-hydroxy-4-methylpentanoate + NAD(+) = 4-methyl-2-oxopentanoate + NADH + H(+). It participates in amino-acid degradation; L-leucine degradation. Its function is as follows. Involved in the reductive branch of L-leucine fermentation. Catalyzes the NADH-dependent reduction of 4-methyl-2-oxopentanoate (2-oxoisocaproate) to (R)-2-hydroxy-4-methylpentanoate ((R)-2-hydroxyisocaproate). For the reverse reaction, the enzyme accepts (R)- but not (S)-2-hydroxy-4-methylpentanoate. Can also use 2-oxopentanoate, 2-oxohexanoate and phenylpyruvate but not 2-oxoisovalerate and 2-oxobutyrate. Cannot use NADPH. This Clostridioides difficile (Peptoclostridium difficile) protein is D-2-hydroxyacid dehydrogenase (NAD(+)).